Here is a 790-residue protein sequence, read N- to C-terminus: MASEGEGVLKKEGLPEKLRILPLRNMVLYPDLVLPLHVTRAGYRRLADEVYRENGLLAVVAQRNEEAEEASPADIYQVGTVGSIIKLLKQADGTYQIIVGASEKVRLRNISQAGDYLEAEVEAVPEDRSTSPEIEALALNLRMGFQKFVSLASLPLDLANFALNAERPMQLVYAVASHLALSVVERQSILEMPETKAALEHVTFYMTRQLEKLELAQRIQDRVKSVMDKRQRDYYLREQLQAIRKELGEGEDTSEEVHELAARLRDLEMPAEARGAAEKEIERLGRMSPSAPEYHVSRNYLDWLLEMPWSVSTEDRIDVRQAAVILDEDHFDLEKVKRRILEYLAVLQLKKDLKGPILCFVGPPGVGKTSLGQSIARTLGRKFLRISLGGVRDEAEIRGHRRTYVGALPGRIVQGLRRVGSNNPVFMLDEIDKIGMDFRGDPSSALLEVLDPEQNFSFSDHYLGVPFDLSRVMFIATGNLLDTVPAALKDRMEVIEIPGYTAEEKLEIARKFLVERETANHGLTSDHIRIGEDAILEIIRSYTREAGVRSLQRNLASVCRNTAKAIAEGASGPIHIDASGIPEILGPVQFLPETATRSWGCGIATGLAWTPSGGQLIFIETLRTHGNGKLLLTGQLGEVMKESATAALTFVRAHAADLEIEGEEFDRSDIHVHVPAGATPKDGPSAGAPMVVALASLMTGREVRKDVAMTGEITLRGDILPVGGIKEKVLAARRAGVKEIMIPHANMKDLADIPDHLRRDMTIHELQTISDVLQLALLPSPRQGGSSPRS.

The region spanning 18–210 (LRILPLRNMV…HVTFYMTRQL (193 aa)) is the Lon N-terminal domain. An ATP-binding site is contributed by 362 to 369 (GPPGVGKT). Residues 598 to 779 (SWGCGIATGL…SDVLQLALLP (182 aa)) form the Lon proteolytic domain. Residues S685 and K728 contribute to the active site.

The protein belongs to the peptidase S16 family. As to quaternary structure, homohexamer. Organized in a ring with a central cavity.

The protein resides in the cytoplasm. It carries out the reaction Hydrolysis of proteins in presence of ATP.. Functionally, ATP-dependent serine protease that mediates the selective degradation of mutant and abnormal proteins as well as certain short-lived regulatory proteins. Required for cellular homeostasis and for survival from DNA damage and developmental changes induced by stress. Degrades polypeptides processively to yield small peptide fragments that are 5 to 10 amino acids long. Binds to DNA in a double-stranded, site-specific manner. This chain is Lon protease 2, found in Syntrophobacter fumaroxidans (strain DSM 10017 / MPOB).